Reading from the N-terminus, the 493-residue chain is UDP-N-acetylmuramoyl-L-alanyl-D-glutamate--L-lysine ligase (493 aa).

Ser-30 contacts UDP-N-acetyl-alpha-D-muramoyl-L-alanyl-D-glutamate. ATP is bound at residue 110–116 (GTNGKTS). Residues Asn-151, 152-153 (TT), Ser-179, and Arg-187 each bind UDP-N-acetyl-alpha-D-muramoyl-L-alanyl-D-glutamate. The residue at position 219 (Lys-219) is an N6-carboxylysine. Positions 406 to 409 (DNPA) match the L-lysine recognition motif motif.

The protein belongs to the MurCDEF family. MurE subfamily. It depends on Mg(2+) as a cofactor. Carboxylation is probably crucial for Mg(2+) binding and, consequently, for the gamma-phosphate positioning of ATP.

The protein localises to the cytoplasm. The catalysed reaction is UDP-N-acetyl-alpha-D-muramoyl-L-alanyl-D-glutamate + L-lysine + ATP = UDP-N-acetyl-alpha-D-muramoyl-L-alanyl-gamma-D-glutamyl-L-lysine + ADP + phosphate + H(+). It functions in the pathway cell wall biogenesis; peptidoglycan biosynthesis. Catalyzes the addition of L-lysine to the nucleotide precursor UDP-N-acetylmuramoyl-L-alanyl-D-glutamate (UMAG) in the biosynthesis of bacterial cell-wall peptidoglycan. Cannot use diaminopimelate as substrate. Can accept L-ornithine as substrate, but the efficiency is 400-fold lower than that with L-lysine. Seems to have a role in beta-lactam antibiotic resistance. The protein is UDP-N-acetylmuramoyl-L-alanyl-D-glutamate--L-lysine ligase of Staphylococcus aureus (strain NCTC 8325 / PS 47).